We begin with the raw amino-acid sequence, 152 residues long: UPF0266 membrane protein YobD (152 aa).

The next 3 membrane-spanning stretches (helical) occupy residues 6–26 (LVLI…QFIM), 45–65 (VDSV…VTSH), and 67–87 (AQMT…IFWI).

Belongs to the UPF0266 family.

The protein localises to the cell inner membrane. This chain is UPF0266 membrane protein YobD, found in Salmonella paratyphi B (strain ATCC BAA-1250 / SPB7).